Consider the following 424-residue polypeptide: Argininosuccinate synthase (424 aa).

ATP contacts are provided by residues 9-17 (AYSGGLDTS) and Ala35. Positions 86 and 91 each coordinate L-citrulline. 114 to 122 (SHGATGKGN) serves as a coordination point for ATP. L-aspartate contacts are provided by Thr118, Asn122, and Asp123. Asn122 is an L-citrulline binding site. L-citrulline contacts are provided by Arg126, Ser179, Ser188, Glu269, and Tyr281.

Belongs to the argininosuccinate synthase family. As to quaternary structure, homotetramer.

It carries out the reaction L-citrulline + L-aspartate + ATP = 2-(N(omega)-L-arginino)succinate + AMP + diphosphate + H(+). It participates in amino-acid biosynthesis; L-arginine biosynthesis; L-arginine from L-ornithine and carbamoyl phosphate: step 2/3. Its pathway is nitrogen metabolism; urea cycle; (N(omega)-L-arginino)succinate from L-aspartate and L-citrulline: step 1/1. This Anopheles gambiae (African malaria mosquito) protein is Argininosuccinate synthase.